The primary structure comprises 1392 residues: ATP-dependent helicase/nuclease subunit A (1392 aa).

In terms of domain architecture, UvrD-like helicase ATP-binding spans 4–595 (FKPTPAQSKA…IVLGENFRSM (592 aa)). 25-32 (ASAGSGKT) provides a ligand contact to ATP. Residues 623-929 (AHLKYAATYY…NVMTIHGSKG (307 aa)) form the UvrD-like helicase C-terminal domain.

This sequence belongs to the helicase family. AddA subfamily. Heterodimer of AddA and AddB/RexB. Mg(2+) is required as a cofactor.

The enzyme catalyses Couples ATP hydrolysis with the unwinding of duplex DNA by translocating in the 3'-5' direction.. It catalyses the reaction ATP + H2O = ADP + phosphate + H(+). Its function is as follows. The heterodimer acts as both an ATP-dependent DNA helicase and an ATP-dependent, dual-direction single-stranded exonuclease. Recognizes the chi site generating a DNA molecule suitable for the initiation of homologous recombination. The AddA nuclease domain is required for chi fragment generation; this subunit has the helicase and 3' -&gt; 5' nuclease activities. The polypeptide is ATP-dependent helicase/nuclease subunit A (Limosilactobacillus reuteri subsp. reuteri (strain JCM 1112) (Lactobacillus reuteri)).